We begin with the raw amino-acid sequence, 491 residues long: N-succinylglutamate 5-semialdehyde dehydrogenase (491 aa).

223–228 (GSANTG) contributes to the NAD(+) binding site. Residues Glu-246 and Cys-280 contribute to the active site.

The protein belongs to the aldehyde dehydrogenase family. AstD subfamily.

The enzyme catalyses N-succinyl-L-glutamate 5-semialdehyde + NAD(+) + H2O = N-succinyl-L-glutamate + NADH + 2 H(+). The protein operates within amino-acid degradation; L-arginine degradation via AST pathway; L-glutamate and succinate from L-arginine: step 4/5. In terms of biological role, catalyzes the NAD-dependent reduction of succinylglutamate semialdehyde into succinylglutamate. This chain is N-succinylglutamate 5-semialdehyde dehydrogenase, found in Photorhabdus laumondii subsp. laumondii (strain DSM 15139 / CIP 105565 / TT01) (Photorhabdus luminescens subsp. laumondii).